The sequence spans 343 residues: Anthranilate phosphoribosyltransferase (343 aa).

5-phospho-alpha-D-ribose 1-diphosphate is bound by residues Gly84, 87–88, Thr92, 94–97, 112–120, and Ser124; these read GD, NIST, and KHGNRGVSS. Gly84 contacts anthranilate. Ser96 is a binding site for Mg(2+). Position 115 (Asn115) interacts with anthranilate. Arg170 contacts anthranilate. Positions 229 and 230 each coordinate Mg(2+).

This sequence belongs to the anthranilate phosphoribosyltransferase family. As to quaternary structure, homodimer. It depends on Mg(2+) as a cofactor.

The enzyme catalyses N-(5-phospho-beta-D-ribosyl)anthranilate + diphosphate = 5-phospho-alpha-D-ribose 1-diphosphate + anthranilate. It participates in amino-acid biosynthesis; L-tryptophan biosynthesis; L-tryptophan from chorismate: step 2/5. Its function is as follows. Catalyzes the transfer of the phosphoribosyl group of 5-phosphorylribose-1-pyrophosphate (PRPP) to anthranilate to yield N-(5'-phosphoribosyl)-anthranilate (PRA). This Burkholderia orbicola (strain MC0-3) protein is Anthranilate phosphoribosyltransferase.